The primary structure comprises 1975 residues: Cadherin-87A (1975 aa).

An N-terminal signal peptide occupies residues 1 to 17 (MKLPLGLLMICLGLTLA). The Extracellular portion of the chain corresponds to 18–1775 (KGETNLPPVF…AIVQDEFDLA (1758 aa)). 14 Cadherin domains span residues 28–132 (TQTL…PPEF), 133–245 (QNTP…PPVF), 246–358 (QGSL…PPVF), 359–472 (NHKE…KPVF), 473–669 (EQES…PPVC), 670–774 (ESPL…VPNF), 775–878 (EQQS…DPYF), 879–998 (VPAT…PPRF), 999–1103 (NAPW…DPKF), 1104–1211 (SQSD…APVF), 1212–1318 (TRDV…KPEF), 1319–1431 (VIPA…RPEF), 1432–1553 (PDAS…PPVF), and 1554–1677 (EKPI…PPEE). N39, N77, and N203 each carry an N-linked (GlcNAc...) asparagine glycan. A glycan (N-linked (GlcNAc...) asparagine) is linked at N424. A disordered region spans residues 535-560 (CHDNGESNRRERRDLNEDEHVEEDDG). Residues 537 to 549 (DNGESNRRERRDL) show a composition bias toward basic and acidic residues. The segment covering 550 to 560 (NEDEHVEEDDG) has biased composition (acidic residues). N730 and N761 each carry an N-linked (GlcNAc...) asparagine glycan. N-linked (GlcNAc...) asparagine glycans are attached at residues N1039, N1049, N1111, N1163, N1217, N1325, N1349, N1492, N1576, and N1691. The helical transmembrane segment at 1776–1796 (VAGLVALVIVLFVGVISFIVL) threads the bilayer. Residues 1797–1975 (CCCLKHWNLS…DGDDAVAELI (179 aa)) are Cytoplasmic-facing. Positions 1887–1899 (YATIQPRNNQNRL) are enriched in polar residues. A disordered region spans residues 1887–1916 (YATIQPRNNQNRLTGGGGAGGGSMRSGGGA). The segment covering 1900–1916 (TGGGGAGGGSMRSGGGA) has biased composition (gly residues).

It localises to the cell membrane. Functionally, cadherins are calcium-dependent cell adhesion proteins. They preferentially interact with themselves in a homophilic manner in connecting cells. The chain is Cadherin-87A (Cad87A) from Drosophila melanogaster (Fruit fly).